Here is a 139-residue protein sequence, read N- to C-terminus: ATP synthase epsilon chain (139 aa).

The protein belongs to the ATPase epsilon chain family. In terms of assembly, F-type ATPases have 2 components, CF(1) - the catalytic core - and CF(0) - the membrane proton channel. CF(1) has five subunits: alpha(3), beta(3), gamma(1), delta(1), epsilon(1). CF(0) has three main subunits: a, b and c.

It is found in the cell membrane. Its function is as follows. Produces ATP from ADP in the presence of a proton gradient across the membrane. This is ATP synthase epsilon chain from Symbiobacterium thermophilum (strain DSM 24528 / JCM 14929 / IAM 14863 / T).